The primary structure comprises 110 residues: MKSVFVESTIFEKYRDEYLSDEEYRLFQAELMLNPKLGDVIQGTGGLRKIRVASKGKGKRGGSRIIYYFLDEKRRFYLLTIYGKNEMSDLNANQRKQLMAFMEAWRNEQS.

Toxic component of a type II toxin-antitoxin (TA) system. Inhibits translation by cleavage of mRNA. This chain is Toxin HigB-2 (higB-2), found in Vibrio cholerae serotype O1 (strain ATCC 39315 / El Tor Inaba N16961).